The primary structure comprises 75 residues: Exodeoxyribonuclease 7 small subunit (75 aa).

Belongs to the XseB family. In terms of assembly, heterooligomer composed of large and small subunits.

The protein resides in the cytoplasm. The catalysed reaction is Exonucleolytic cleavage in either 5'- to 3'- or 3'- to 5'-direction to yield nucleoside 5'-phosphates.. Functionally, bidirectionally degrades single-stranded DNA into large acid-insoluble oligonucleotides, which are then degraded further into small acid-soluble oligonucleotides. The chain is Exodeoxyribonuclease 7 small subunit from Citrifermentans bemidjiense (strain ATCC BAA-1014 / DSM 16622 / JCM 12645 / Bem) (Geobacter bemidjiensis).